The following is a 210-amino-acid chain: Probable glutathione peroxidase 8 (210 aa).

Residues 21-40 traverse the membrane as a helical segment; that stretch reads VLLSMTVGVGCLLLLQTQLL.

It belongs to the glutathione peroxidase family.

The protein resides in the membrane. It catalyses the reaction 2 glutathione + H2O2 = glutathione disulfide + 2 H2O. This chain is Probable glutathione peroxidase 8 (gpx8), found in Tetraodon nigroviridis (Spotted green pufferfish).